A 305-amino-acid chain; its full sequence is MSRLAVELPGLSMKNPIMPASGCFGFGKEFAGFYDLNHLGAIAIKATTVEPRFGNPTPRVAETHSGMLNAIGLQNPGLNNVIDNELARLADVDVPIVANIAGSTVNDYVEVAEAISRVDNVHALELNISCPNVKEGGIAFGTVPDVAAQLTQEVKRVSTVPVYVKLSPNVSDIVEMAQAVERAGADGLSMINTLLGMRLDLKRRTPILANGTGGLSGPAIKPVAIRMIYQVSQAVSIPIIGMGGIQSADDVLEFMLAGADAVAVGTANFTDPYVCPTIIDELPKRMDELGIERIADIVGGSWKQS.

FMN is bound by residues Ser21 and 45-46; that span reads KA. Substrate-binding positions include Lys45 and 69–73; that span reads NAIGL. FMN contacts are provided by Asn99 and Asn127. Asn127 serves as a coordination point for substrate. The active-site Nucleophile is Cys130. FMN-binding residues include Lys165 and Ile191. Residue 192–193 coordinates substrate; sequence NT. Residues Gly217, 243–244, and 265–266 contribute to the FMN site; these read GG and GT.

This sequence belongs to the dihydroorotate dehydrogenase family. Type 1 subfamily. As to quaternary structure, heterotetramer of 2 PyrK and 2 PyrD type B subunits. The cofactor is FMN.

Its subcellular location is the cytoplasm. The catalysed reaction is (S)-dihydroorotate + NAD(+) = orotate + NADH + H(+). The protein operates within pyrimidine metabolism; UMP biosynthesis via de novo pathway; orotate from (S)-dihydroorotate (NAD(+) route): step 1/1. In terms of biological role, catalyzes the conversion of dihydroorotate to orotate with NAD(+) as electron acceptor. In Halalkalibacterium halodurans (strain ATCC BAA-125 / DSM 18197 / FERM 7344 / JCM 9153 / C-125) (Bacillus halodurans), this protein is Dihydroorotate dehydrogenase B (NAD(+)), catalytic subunit (pyrD).